The sequence spans 396 residues: S-adenosylmethionine synthase (396 aa).

Histidine 15 provides a ligand contact to ATP. Aspartate 17 contributes to the Mg(2+) binding site. Glutamate 43 is a K(+) binding site. L-methionine-binding residues include glutamate 56 and glutamine 99. The flexible loop stretch occupies residues 99-109 (QSGDIAQGVDT). ATP-binding positions include 173–175 (DGK), 241–242 (RF), aspartate 250, 256–257 (RK), alanine 273, and lysine 277. Aspartate 250 contributes to the L-methionine binding site. An L-methionine-binding site is contributed by lysine 281.

The protein belongs to the AdoMet synthase family. In terms of assembly, homotetramer; dimer of dimers. Requires Mg(2+) as cofactor. It depends on K(+) as a cofactor.

The protein resides in the cytoplasm. The enzyme catalyses L-methionine + ATP + H2O = S-adenosyl-L-methionine + phosphate + diphosphate. Its pathway is amino-acid biosynthesis; S-adenosyl-L-methionine biosynthesis; S-adenosyl-L-methionine from L-methionine: step 1/1. Catalyzes the formation of S-adenosylmethionine (AdoMet) from methionine and ATP. The overall synthetic reaction is composed of two sequential steps, AdoMet formation and the subsequent tripolyphosphate hydrolysis which occurs prior to release of AdoMet from the enzyme. The sequence is that of S-adenosylmethionine synthase from Nocardioides sp. (strain ATCC BAA-499 / JS614).